A 332-amino-acid polypeptide reads, in one-letter code: Ribose-phosphate pyrophosphokinase (332 aa).

Residues 43–45 (DGE) and 102–103 (RQ) each bind ATP. Mg(2+)-binding residues include His-136 and Asp-176. Residue Lys-199 is part of the active site. Residues Arg-201, Asp-225, and 229–233 (DTGGT) contribute to the D-ribose 5-phosphate site.

This sequence belongs to the ribose-phosphate pyrophosphokinase family. Class I subfamily. Homohexamer. Mg(2+) serves as cofactor.

It is found in the cytoplasm. It carries out the reaction D-ribose 5-phosphate + ATP = 5-phospho-alpha-D-ribose 1-diphosphate + AMP + H(+). Its pathway is metabolic intermediate biosynthesis; 5-phospho-alpha-D-ribose 1-diphosphate biosynthesis; 5-phospho-alpha-D-ribose 1-diphosphate from D-ribose 5-phosphate (route I): step 1/1. Involved in the biosynthesis of the central metabolite phospho-alpha-D-ribosyl-1-pyrophosphate (PRPP) via the transfer of pyrophosphoryl group from ATP to 1-hydroxyl of ribose-5-phosphate (Rib-5-P). The protein is Ribose-phosphate pyrophosphokinase of Mycoplasma genitalium (strain ATCC 33530 / DSM 19775 / NCTC 10195 / G37) (Mycoplasmoides genitalium).